A 409-amino-acid chain; its full sequence is uncharacterized protein (409 aa).

The N-terminal stretch at 1–39 (MVSDSKLELPLPVNQQKPRRRRILKVHLLIAALILSAVG) is a signal peptide. Histidine 67, aspartate 69, glutamate 181, histidine 250, and histidine 271 together coordinate Zn(2+).

This sequence belongs to the metallo-dependent hydrolases superfamily. Peptidase M19 family. Interacts with dil1. It depends on Zn(2+) as a cofactor.

The catalysed reaction is an L-aminoacyl-L-amino acid + H2O = 2 an L-alpha-amino acid. This is an uncharacterized protein from Schizosaccharomyces pombe (strain 972 / ATCC 24843) (Fission yeast).